The sequence spans 123 residues: uncharacterized protein (123 aa).

A run of 2 helical transmembrane segments spans residues 53-73 (VWFL…FFFL) and 75-95 (VLWF…VFSH).

It is found in the membrane. This is an uncharacterized protein from Saccharomyces cerevisiae (strain ATCC 204508 / S288c) (Baker's yeast).